Reading from the N-terminus, the 377-residue chain is Dehydrogenase/reductase SDR family member 13 (377 aa).

A signal peptide spans 1–25 (MEALLLGAGLLLGAYVLVYYNLVKA). Residues Ser-46 and Ile-48 each coordinate NAD(+). Ser-170 contacts substrate. Residues Tyr-197, Lys-201, and Ser-232 each coordinate NAD(+). The Proton acceptor role is filled by Tyr-197. Residues 309 to 377 (RLAGLGPGED…AKVEPEIQLS (69 aa)) form a disordered region. The segment covering 317 to 331 (EDAEPDEDPQSEDSE) has biased composition (acidic residues). Residues 347-357 (SQPYPSPQSSP) show a composition bias toward low complexity. Residues 368 to 377 (AKVEPEIQLS) show a composition bias toward basic and acidic residues.

This sequence belongs to the short-chain dehydrogenases/reductases (SDR) family.

Its subcellular location is the secreted. Functionally, putative oxidoreductase. This Homo sapiens (Human) protein is Dehydrogenase/reductase SDR family member 13.